Reading from the N-terminus, the 168-residue chain is Gastrula zinc finger protein XlCGF7.1 (168 aa).

6 consecutive C2H2-type zinc fingers follow at residues 6–28, 34–56, 62–84, 90–112, 118–140, and 146–168; these read FTCT…QRTH, FTCT…LKCH, FMCT…RKIH, YICT…QTVH, FTCS…QKIH, and FKCN…ERIH.

It belongs to the krueppel C2H2-type zinc-finger protein family.

The protein resides in the nucleus. Its function is as follows. May be involved in transcriptional regulation. The protein is Gastrula zinc finger protein XlCGF7.1 of Xenopus laevis (African clawed frog).